The primary structure comprises 724 residues: uncharacterized protein (724 aa).

Disordered stretches follow at residues 1 to 23, 166 to 477, 496 to 517, and 532 to 691; these read MEDR…IPDN, PDGY…PPRD, EAHD…AHGP, and DHPI…PALS. 2 stretches are compositionally biased toward polar residues: residues 227-245 and 270-296; these read VSQS…TVNQ and STTL…TSDA. Basic and acidic residues predominate over residues 304–322; that stretch reads TRDHDRYGNGRGPDTDRLE. Residues 403 to 413 show a composition bias toward polar residues; that stretch reads PSSSHSETPNM. Basic and acidic residues-rich tracts occupy residues 550-560 and 637-657; these read RNHEFTEDKRL and LRHD…DLAA. A compositionally biased stretch (low complexity) spans 682–691; it reads RLAAASPALS.

This is an uncharacterized protein from Neurospora crassa (strain ATCC 24698 / 74-OR23-1A / CBS 708.71 / DSM 1257 / FGSC 987).